The sequence spans 230 residues: uncharacterized protein (230 aa).

The helical transmembrane segment at 7–23 (LFTASILSLGYLVFICG) threads the bilayer. Positions 27 to 230 (KPKPTASTES…VKTEGTLKKN (204 aa)) are disordered. Positions 50-59 (AVPQKPAAPA) are enriched in low complexity. The segment covering 60–83 (AEEKAPVDPKDPKSKDVDEAKKPD) has biased composition (basic and acidic residues). The span at 101-112 (KKSKKSEKSKKK) shows a compositional bias: basic residues. A compositionally biased stretch (basic and acidic residues) spans 113–173 (KTEEKVMSED…KEKSKDETVP (61 aa)). A compositionally biased stretch (acidic residues) spans 199–210 (ETDEFPTIDEDA). Basic and acidic residues predominate over residues 211–230 (EKTKKTEKKDVKTEGTLKKN).

The protein localises to the membrane. This is an uncharacterized protein from Caenorhabditis elegans.